The sequence spans 442 residues: Serine--tRNA ligase (442 aa).

249-251 (TSE) is a binding site for L-serine. Residue 280–282 (RSE) coordinates ATP. Position 303 (glutamate 303) interacts with L-serine. 367–370 (EISS) provides a ligand contact to ATP. An L-serine-binding site is contributed by serine 402.

The protein belongs to the class-II aminoacyl-tRNA synthetase family. Type-1 seryl-tRNA synthetase subfamily. In terms of assembly, homodimer. The tRNA molecule binds across the dimer.

The protein resides in the cytoplasm. It catalyses the reaction tRNA(Ser) + L-serine + ATP = L-seryl-tRNA(Ser) + AMP + diphosphate + H(+). It carries out the reaction tRNA(Sec) + L-serine + ATP = L-seryl-tRNA(Sec) + AMP + diphosphate + H(+). It functions in the pathway aminoacyl-tRNA biosynthesis; selenocysteinyl-tRNA(Sec) biosynthesis; L-seryl-tRNA(Sec) from L-serine and tRNA(Sec): step 1/1. Functionally, catalyzes the attachment of serine to tRNA(Ser). Is also able to aminoacylate tRNA(Sec) with serine, to form the misacylated tRNA L-seryl-tRNA(Sec), which will be further converted into selenocysteinyl-tRNA(Sec). This Acidovorax ebreus (strain TPSY) (Diaphorobacter sp. (strain TPSY)) protein is Serine--tRNA ligase.